The primary structure comprises 439 residues: tRNA modification GTPase MnmE (439 aa).

(6S)-5-formyl-5,6,7,8-tetrahydrofolate contacts are provided by arginine 23, glutamate 80, and lysine 120. A TrmE-type G domain is found at 217–365 (GLKIVIAGEP…LLTALQSHLP (149 aa)). Asparagine 227 contributes to the K(+) binding site. GTP-binding positions include 227–232 (NAGKSS), 246–252 (TEVAGTT), and 271–274 (DTAG). Serine 231 contributes to the Mg(2+) binding site. Positions 246, 248, and 251 each coordinate K(+). Threonine 252 contributes to the Mg(2+) binding site. Lysine 439 contacts (6S)-5-formyl-5,6,7,8-tetrahydrofolate.

This sequence belongs to the TRAFAC class TrmE-Era-EngA-EngB-Septin-like GTPase superfamily. TrmE GTPase family. Homodimer. Heterotetramer of two MnmE and two MnmG subunits. It depends on K(+) as a cofactor.

The protein resides in the cytoplasm. Functionally, exhibits a very high intrinsic GTPase hydrolysis rate. Involved in the addition of a carboxymethylaminomethyl (cmnm) group at the wobble position (U34) of certain tRNAs, forming tRNA-cmnm(5)s(2)U34. The polypeptide is tRNA modification GTPase MnmE (Rhizobium meliloti (strain 1021) (Ensifer meliloti)).